We begin with the raw amino-acid sequence, 250 residues long: MSGHSKWSTIKRKKAATDQKRGNLFTKLVREITIAAKMGGGDPSGNPRLRLALDNARANSMPQENIQRAIKKGTGELDGVVYEEITYEGYGPGGIALIIETATDNRNRTVADIRHIINRSNGSLGENGSVSWMFHRKGCIDVLKSSAGEEELMEILLEAGLEDLNTDDEQFYNVIIDVKDLESAKKALDDKGIAYENARMDMIPDNYVELEAEDAVKAVKLIDALENSDDVQVVYSNIEFSEQAMNSLDS.

It belongs to the TACO1 family.

Its subcellular location is the cytoplasm. In Prosthecochloris aestuarii (strain DSM 271 / SK 413), this protein is Probable transcriptional regulatory protein Paes_0496.